A 527-amino-acid polypeptide reads, in one-letter code: Baicalin-beta-D-glucuronidase (527 aa).

Residues 1–25 form the signal peptide; that stretch reads MGFQVWQKGLCVLCFSLIFICGVIG. Glu212 serves as the catalytic Proton donor. Glu329 acts as the Nucleophile in catalysis.

The protein belongs to the glycosyl hydrolase 79 family. In terms of assembly, homotetramer.

It catalyses the reaction baicalin + H2O = baicalein + D-glucuronate + H(+). Its function is as follows. Beta-glucuronidase involved in the initiation of H(2)O(2) metabolism via the production of baicalein. Unable to use glycyrrhizin, gypsogenin-3-O-D-glucuronide, luteolin-7-O-D-glucoside and apigenin-7-O-D-glucoside as substrates. The sequence is that of Baicalin-beta-D-glucuronidase (SGUS) from Scutellaria baicalensis (Baical skullcap).